Reading from the N-terminus, the 124-residue chain is Large ribosomal subunit protein bL12 (124 aa).

It belongs to the bacterial ribosomal protein bL12 family. Homodimer. Part of the ribosomal stalk of the 50S ribosomal subunit. Forms a multimeric L10(L12)X complex, where L10 forms an elongated spine to which 2 to 4 L12 dimers bind in a sequential fashion. Binds GTP-bound translation factors.

Functionally, forms part of the ribosomal stalk which helps the ribosome interact with GTP-bound translation factors. Is thus essential for accurate translation. The polypeptide is Large ribosomal subunit protein bL12 (Ralstonia pickettii (strain 12J)).